The following is a 296-amino-acid chain: Nucleotide-binding protein SSA_0810 (296 aa).

An ATP-binding site is contributed by 13-20 (GMSGAGKT). 63–66 (DMRS) contacts GTP. The tract at residues 277 to 296 (WPVNSSHRDKNRRKETVNRS) is disordered. Residues 282–296 (SHRDKNRRKETVNRS) are compositionally biased toward basic and acidic residues.

The protein belongs to the RapZ-like family.

Functionally, displays ATPase and GTPase activities. The sequence is that of Nucleotide-binding protein SSA_0810 from Streptococcus sanguinis (strain SK36).